Consider the following 280-residue polypeptide: Cell envelope integrity protein EipB (280 aa).

The signal sequence occupies residues 1-24; that stretch reads MRFVRIAAAASGATVFMWAGFAGA. A disulfide bridge links Cys-69 with Cys-278.

As to quaternary structure, monomer.

Its subcellular location is the periplasm. Its function is as follows. Functions in the periplasm to maintain cell envelope integrity. In Brucella abortus (strain 2308), this protein is Cell envelope integrity protein EipB.